A 500-amino-acid polypeptide reads, in one-letter code: Ent-kaurene oxidase P450-4 (500 aa).

A helical transmembrane segment spans residues 6-26 (VHWLIYVAFGAWLCSYVIHVL). Residue N240 is glycosylated (N-linked (GlcNAc...) asparagine). C441 provides a ligand contact to heme. An N-linked (GlcNAc...) asparagine glycan is attached at N475.

This sequence belongs to the cytochrome P450 family. Heme serves as cofactor.

Its subcellular location is the membrane. It catalyses the reaction ent-kaur-16-ene + 3 reduced [NADPH--hemoprotein reductase] + 3 O2 = ent-kaur-16-en-19-oate + 3 oxidized [NADPH--hemoprotein reductase] + 4 H2O + 4 H(+). The protein operates within plant hormone biosynthesis; gibberellin biosynthesis. Its function is as follows. Ent-kaurene oxidase; part of the gene cluster that mediates the biosynthesis of gibberellins (GAs), diterpenoids that may provide a selective advantage during infection of the preferred host plant, rice. Gibberellins (GAs) are diterpenoids and are synthesized via the mevalonate pathway. Biosynthesis of the major metabolite GA3 (gibberellic acid) from geranylgeranyl diphosphate (GGPP) requires 13 steps. The GGPP produced by the geranylgeranyl diphosphate synthase GGS2 is converted to ent-kaurene via ent-copalyldiphosphate in a two-step cyclization reaction performed by the bifunctional ent-copalyl diphosphate synthase/ent-kaurene synthase enzyme (CPS/KS). Ent-Kaurene is metabolized to GAs by a series of oxidation reactions catalyzed by cytochrome P450 monooxygenases. Cytochrome P450 monooxygenase P450-4 is an ent-kaurene oxidase that catalyzes the three oxidation steps between ent-kaurene and ent-kaurenoic acid. The highly multifunctional cytochrome P450 monooxygenase P450-1 then catalyzes four steps involving oxidation at two carbon atoms, in the main pathway from ent-kaurenoic acid to GA14 via GA12-aldehyde as well as producing kaurenolides and fujenoic acids as by-products. The cytochrome P450 monooxygenase P450-2 then converts GA14 to GA4 by removal of C-20. GA4 is further converted to GA7 by the GA4 desaturase DES via 1,2-desaturation before cytochrome P450 monooxygenase P450-3, a 13-hydroxylase, hydroxylates GA7 to GA3, the final product of the GA-biosynthetic pathway. This is Ent-kaurene oxidase P450-4 from Gibberella fujikuroi (strain CBS 195.34 / IMI 58289 / NRRL A-6831) (Bakanae and foot rot disease fungus).